Consider the following 211-residue polypeptide: 3-demethoxyubiquinol 3-hydroxylase (211 aa).

Fe cation-binding residues include Glu60, Glu90, His93, Glu142, Glu174, and His177.

Belongs to the COQ7 family. It depends on Fe cation as a cofactor.

The protein resides in the cell membrane. The enzyme catalyses a 5-methoxy-2-methyl-3-(all-trans-polyprenyl)benzene-1,4-diol + AH2 + O2 = a 3-demethylubiquinol + A + H2O. It functions in the pathway cofactor biosynthesis; ubiquinone biosynthesis. In terms of biological role, catalyzes the hydroxylation of 2-nonaprenyl-3-methyl-6-methoxy-1,4-benzoquinol during ubiquinone biosynthesis. In Francisella tularensis subsp. tularensis (strain FSC 198), this protein is 3-demethoxyubiquinol 3-hydroxylase.